The chain runs to 416 residues: Lipase A (416 aa).

Residues 1–32 (MRLAPQKPLLLSTVLHLLLSIWMLGFASLAGA) form the signal peptide. 2 disulfides stabilise this stretch: Cys-67/Cys-391 and Cys-177/Cys-180. Asn-179 carries N-linked (GlcNAc...) asparagine glycosylation. The active-site Nucleophile is the Ser-219. Catalysis depends on charge relay system residues Asp-287 and His-381.

The protein belongs to the AB hydrolase superfamily. Lipase family. In terms of processing, glycosylated.

It localises to the secreted. The enzyme catalyses Deacetylation of xylans and xylo-oligosaccharides.. It carries out the reaction a triacylglycerol + H2O = a diacylglycerol + a fatty acid + H(+). In terms of biological role, lipolytic enzyme that possesses both lipase and acetylxylan esterase activity. Active towards p-nitrophenol esters of various carbon chain length with preference for medium-chain fatty acids (C-8). Also highly active on the acetylated compounds xylose tetra-acetate and oat spelt xylan. The protein is Lipase A of Sodiomyces alcalophilus (Acremonium alcalophilum).